Reading from the N-terminus, the 487-residue chain is Malonate-semialdehyde dehydrogenase 2 (487 aa).

Residues F154, K178, E181, R182, and S231 each contribute to the NAD(+) site. C286 (nucleophile) is an active-site residue. Position 386 (E386) interacts with NAD(+).

Belongs to the aldehyde dehydrogenase family. IolA subfamily. In terms of assembly, homotetramer.

It catalyses the reaction 3-oxopropanoate + NAD(+) + CoA + H2O = hydrogencarbonate + acetyl-CoA + NADH + H(+). The enzyme catalyses 2-methyl-3-oxopropanoate + NAD(+) + CoA + H2O = propanoyl-CoA + hydrogencarbonate + NADH + H(+). The protein operates within polyol metabolism; myo-inositol degradation into acetyl-CoA; acetyl-CoA from myo-inositol: step 7/7. In terms of biological role, catalyzes the oxidation of malonate semialdehyde (MSA) and methylmalonate semialdehyde (MMSA) into acetyl-CoA and propanoyl-CoA, respectively. Is involved in a myo-inositol catabolic pathway. Bicarbonate, and not CO2, is the end-product of the enzymatic reaction. The chain is Malonate-semialdehyde dehydrogenase 2 from Bacillus anthracis.